The chain runs to 722 residues: Polyribonucleotide nucleotidyltransferase (722 aa).

Residues D495 and D501 each coordinate Mg(2+). The KH domain maps to 562–621 (PRLLSFRIDPELIGTVIGPGGRTIKGITERTNTKIDIEDGGIVTIASHDGAAAEEAQRII). Residues 631–699 (GEIFPGSITR…NRGRINLTLR (69 aa)) form the S1 motif domain. The disordered stretch occupies residues 700–722 (GVSQNGGMSNYPEPTPTPVAPLT). Residues 712 to 722 (EPTPTPVAPLT) are compositionally biased toward pro residues.

It belongs to the polyribonucleotide nucleotidyltransferase family. It depends on Mg(2+) as a cofactor.

The protein resides in the cytoplasm. The catalysed reaction is RNA(n+1) + phosphate = RNA(n) + a ribonucleoside 5'-diphosphate. Involved in mRNA degradation. Catalyzes the phosphorolysis of single-stranded polyribonucleotides processively in the 3'- to 5'-direction. In Prochlorococcus marinus (strain NATL1A), this protein is Polyribonucleotide nucleotidyltransferase.